Reading from the N-terminus, the 225-residue chain is Cytidylate kinase (225 aa).

12 to 20 (GPSGAGKGT) is an ATP binding site.

The protein belongs to the cytidylate kinase family. Type 1 subfamily.

Its subcellular location is the cytoplasm. It catalyses the reaction CMP + ATP = CDP + ADP. The catalysed reaction is dCMP + ATP = dCDP + ADP. The chain is Cytidylate kinase from Pectobacterium atrosepticum (strain SCRI 1043 / ATCC BAA-672) (Erwinia carotovora subsp. atroseptica).